Reading from the N-terminus, the 238-residue chain is NEDD4-binding protein 2-like 1 (238 aa).

2 disordered regions span residues 1–36 (MEDS…PRRH) and 183–212 (VLHA…WNTY). A compositionally biased stretch (pro residues) spans 20–31 (QPPPRPPPARGP). Residues 192-212 (ANRNQGRNSEPSSGSGYWNTY) show a composition bias toward polar residues.

As to quaternary structure, interacts with dynactin subunit proteins, including DCTN4, DCTN5 and DCTN5.

In terms of biological role, might play a role in adipocyte differentiation and triglyceride accumulation. The chain is NEDD4-binding protein 2-like 1 (N4bp2l1) from Mus musculus (Mouse).